We begin with the raw amino-acid sequence, 360 residues long: Phospho-N-acetylmuramoyl-pentapeptide-transferase (360 aa).

Helical transmembrane passes span 26 to 46, 72 to 92, 94 to 114, 132 to 152, 168 to 188, 199 to 219, 236 to 256, 263 to 283, 288 to 308, and 338 to 358; these read AIVS…RMIA, PTMG…LWAY, SNPY…IGFV, WKYF…YLAG, VMPQ…VGTG, GLAI…AWAT, AGEL…FLWF, VFMG…IAVL, FLLV…ILQV, and VIVR…ATLK.

Belongs to the glycosyltransferase 4 family. MraY subfamily. Mg(2+) is required as a cofactor.

It localises to the cell inner membrane. It carries out the reaction UDP-N-acetyl-alpha-D-muramoyl-L-alanyl-gamma-D-glutamyl-meso-2,6-diaminopimeloyl-D-alanyl-D-alanine + di-trans,octa-cis-undecaprenyl phosphate = di-trans,octa-cis-undecaprenyl diphospho-N-acetyl-alpha-D-muramoyl-L-alanyl-D-glutamyl-meso-2,6-diaminopimeloyl-D-alanyl-D-alanine + UMP. Its pathway is cell wall biogenesis; peptidoglycan biosynthesis. Its function is as follows. Catalyzes the initial step of the lipid cycle reactions in the biosynthesis of the cell wall peptidoglycan: transfers peptidoglycan precursor phospho-MurNAc-pentapeptide from UDP-MurNAc-pentapeptide onto the lipid carrier undecaprenyl phosphate, yielding undecaprenyl-pyrophosphoryl-MurNAc-pentapeptide, known as lipid I. The protein is Phospho-N-acetylmuramoyl-pentapeptide-transferase of Enterobacter sp. (strain 638).